Here is a 211-residue protein sequence, read N- to C-terminus: DNA/RNA-binding protein ALBA2 (211 aa).

The span at 84 to 99 (NSGLKKNAKNEDKKSG) shows a compositional bias: basic and acidic residues. Residues 84–121 (NSGLKKNAKNEDKKSGDEEEEEEEEEEDEENNKNKEAN) are disordered. Over residues 100–113 (DEEEEEEEEEEDEE) the composition is skewed to acidic residues.

The protein belongs to the histone-like Alba family. In terms of assembly, identified in a TARE6-associated complex consisting of over 30 proteins and including ALBA1, ALBA2 and ALBA4; the complex binds to the non-coding subtelomeric repeat region TARE6.

The protein resides in the nucleus. Its subcellular location is the chromosome. It localises to the telomere. It is found in the cytoplasm. Possesses DNA- and RNA-binding activities. Binds to DNA with relaxed sequence specificity. Associates with the subtelomeric TARE6 repeats. This chain is DNA/RNA-binding protein ALBA2, found in Plasmodium falciparum (isolate 3D7).